A 187-amino-acid polypeptide reads, in one-letter code: UPF0301 protein Clim_0777 (187 aa).

It belongs to the UPF0301 (AlgH) family.

The sequence is that of UPF0301 protein Clim_0777 from Chlorobium limicola (strain DSM 245 / NBRC 103803 / 6330).